Reading from the N-terminus, the 121-residue chain is MTDRVDINRVLMEIRSFKAQNQAMNSVQGVGNSLEGVNNTRGTQQVNGPRFGELLEQAVSKVNEVQQASGAMSQAYIQGDSNVGITDVMIASQKAGVAFDAMVQVRNKLVEAYKDVMNMPI.

The protein belongs to the FliE family.

The protein resides in the bacterial flagellum basal body. This chain is Flagellar hook-basal body complex protein FliE, found in Saccharophagus degradans (strain 2-40 / ATCC 43961 / DSM 17024).